Consider the following 583-residue polypeptide: NEDD4-binding protein 2-like 2 (583 aa).

A coiled-coil region spans residues 162 to 197 (NSEKSEIDNELFQFYKEIEELEKEKDGFENSCKESE). A disordered region spans residues 549 to 575 (EPSHKSTQRPPPPQGRQRWGGSLGSHN).

In Homo sapiens (Human), this protein is NEDD4-binding protein 2-like 2 (N4BP2L2).